We begin with the raw amino-acid sequence, 240 residues long: Phosphoribosylaminoimidazole-succinocarboxamide synthase (240 aa).

This sequence belongs to the SAICAR synthetase family.

The catalysed reaction is 5-amino-1-(5-phospho-D-ribosyl)imidazole-4-carboxylate + L-aspartate + ATP = (2S)-2-[5-amino-1-(5-phospho-beta-D-ribosyl)imidazole-4-carboxamido]succinate + ADP + phosphate + 2 H(+). It functions in the pathway purine metabolism; IMP biosynthesis via de novo pathway; 5-amino-1-(5-phospho-D-ribosyl)imidazole-4-carboxamide from 5-amino-1-(5-phospho-D-ribosyl)imidazole-4-carboxylate: step 1/2. The protein is Phosphoribosylaminoimidazole-succinocarboxamide synthase of Coxiella burnetii (strain RSA 493 / Nine Mile phase I).